The following is a 159-amino-acid chain: Ribosomal RNA large subunit methyltransferase H (159 aa).

Residues L76, G108, and F127–F132 each bind S-adenosyl-L-methionine.

This sequence belongs to the RNA methyltransferase RlmH family. Homodimer.

The protein localises to the cytoplasm. The enzyme catalyses pseudouridine(1915) in 23S rRNA + S-adenosyl-L-methionine = N(3)-methylpseudouridine(1915) in 23S rRNA + S-adenosyl-L-homocysteine + H(+). Its function is as follows. Specifically methylates the pseudouridine at position 1915 (m3Psi1915) in 23S rRNA. This chain is Ribosomal RNA large subunit methyltransferase H, found in Clostridium kluyveri (strain NBRC 12016).